A 153-amino-acid polypeptide reads, in one-letter code: UPF0311 protein RPA1785 (153 aa).

It belongs to the UPF0311 family.

This is UPF0311 protein RPA1785 from Rhodopseudomonas palustris (strain ATCC BAA-98 / CGA009).